The sequence spans 30 residues: Photosystem I reaction center subunit XII (30 aa).

Residues 7-27 (VFIGLVIALVPAILAFKLGLS) traverse the membrane as a helical segment.

This sequence belongs to the PsaM family.

The protein localises to the plastid. Its subcellular location is the chloroplast thylakoid membrane. This is Photosystem I reaction center subunit XII from Cyanidium caldarium (Red alga).